Reading from the N-terminus, the 218-residue chain is MSKISLDALNVRNALIEKGIETPMIDPTQAKNERRESIAKHMHEVMKLIGLDLRDDSLEETPNRLAKMFIDEIFSGMDYANFPKMTKIKNQMKVSEMVQVNDITLTSTCEHHFVTIDGKVCVAYYPKDWVIGLSKINRIVSFFAQRPQVQERLTEQLLTAFQTILETDDVAVYVKATHFCVKARGIRDTNSYTVTSAYGGVFLEDRDTRKEFLATVQK.

Residues Cys109, His112, and Cys180 each coordinate Zn(2+).

It belongs to the GTP cyclohydrolase I family. In terms of assembly, toroid-shaped homodecamer, composed of two pentamers of five dimers.

It carries out the reaction GTP + H2O = 7,8-dihydroneopterin 3'-triphosphate + formate + H(+). The protein operates within cofactor biosynthesis; 7,8-dihydroneopterin triphosphate biosynthesis; 7,8-dihydroneopterin triphosphate from GTP: step 1/1. This Haemophilus influenzae (strain ATCC 51907 / DSM 11121 / KW20 / Rd) protein is GTP cyclohydrolase 1 (folE).